A 381-amino-acid polypeptide reads, in one-letter code: Mannitol-1-phosphate 5-dehydrogenase (381 aa).

3–14 (AVHFGAGNIGRG) contacts NAD(+).

Belongs to the mannitol dehydrogenase family.

It catalyses the reaction D-mannitol 1-phosphate + NAD(+) = beta-D-fructose 6-phosphate + NADH + H(+). The chain is Mannitol-1-phosphate 5-dehydrogenase from Exiguobacterium sibiricum (strain DSM 17290 / CCUG 55495 / CIP 109462 / JCM 13490 / 255-15).